The following is a 355-amino-acid chain: UDP-N-acetylglucosamine--N-acetylmuramyl-(pentapeptide) pyrophosphoryl-undecaprenol N-acetylglucosamine transferase (355 aa).

UDP-N-acetyl-alpha-D-glucosamine contacts are provided by residues 15–17, Asn-127, Arg-163, Ser-191, Ile-244, 263–268, and Gln-288; these read TGG and ALTVSE.

It belongs to the glycosyltransferase 28 family. MurG subfamily.

The protein localises to the cell inner membrane. The enzyme catalyses di-trans,octa-cis-undecaprenyl diphospho-N-acetyl-alpha-D-muramoyl-L-alanyl-D-glutamyl-meso-2,6-diaminopimeloyl-D-alanyl-D-alanine + UDP-N-acetyl-alpha-D-glucosamine = di-trans,octa-cis-undecaprenyl diphospho-[N-acetyl-alpha-D-glucosaminyl-(1-&gt;4)]-N-acetyl-alpha-D-muramoyl-L-alanyl-D-glutamyl-meso-2,6-diaminopimeloyl-D-alanyl-D-alanine + UDP + H(+). It functions in the pathway cell wall biogenesis; peptidoglycan biosynthesis. Cell wall formation. Catalyzes the transfer of a GlcNAc subunit on undecaprenyl-pyrophosphoryl-MurNAc-pentapeptide (lipid intermediate I) to form undecaprenyl-pyrophosphoryl-MurNAc-(pentapeptide)GlcNAc (lipid intermediate II). The chain is UDP-N-acetylglucosamine--N-acetylmuramyl-(pentapeptide) pyrophosphoryl-undecaprenol N-acetylglucosamine transferase from Salmonella enteritidis PT4 (strain P125109).